Consider the following 1336-residue polypeptide: Misshapen-like kinase 1 (1336 aa).

The Protein kinase domain occupies 25-289 (FELVEVVGNG…TEQLLKFPFI (265 aa)). ATP is bound by residues 31-39 (VGNGTYGQV) and Lys54. The active-site Proton acceptor is the Asp153. 3 disordered regions span residues 299 to 347 (RIQL…NVPG), 363 to 383 (KSNS…QRDP), and 395 to 890 (QRRI…GGTM). Residues 317–333 (EETEYEYSGSEEEDDSH) are compositionally biased toward acidic residues. Ser324 and Ser326 each carry phosphoserine. Positions 371 to 380 (QQQQLQQQQQ) are enriched in low complexity. The span at 396 to 466 (RRIEEQKEER…EEQRQSERLQ (71 aa)) shows a compositional bias: basic and acidic residues. The span at 479–496 (QKQQQQQQQQQQQQQQQQ) shows a compositional bias: low complexity. Omega-N-methylarginine occurs at positions 502 and 510. Over residues 519–529 (AWAREVEERAR) the composition is skewed to basic and acidic residues. A compositionally biased stretch (polar residues) spans 531 to 544 (NKQQNSPLAKTKPS). The span at 548–562 (PEPPIPQASPSPPGP) shows a compositional bias: pro residues. A compositionally biased stretch (polar residues) spans 599 to 609 (RSQSLQDQPTR). Residues 622–632 (PAAVPTPTATP) show a composition bias toward low complexity. Ser643 carries the phosphoserine modification. Residues 672 to 684 (QRTSSIATALNTS) show a composition bias toward polar residues. Ser703 is modified (phosphoserine). The segment covering 718–731 (PKPPGPPAQPPGPP) has biased composition (pro residues). Residues 738–750 (DLRRSDPGWERSD) show a composition bias toward basic and acidic residues. Phosphoserine is present on residues Ser756, Ser765, Ser781, Ser782, and Ser786. Residues 808–825 (LLKERTLDEAPKPPKKAM) are compositionally biased toward basic and acidic residues. Positions 832 to 848 (EEVESSEDEEEEGDGEP) are enriched in acidic residues. The segment at 870–1336 (MVVHDVEEVS…TLNRNCIMNW (467 aa)) is mediates interaction with RAP2A. The residue at position 895 (Thr895) is a Phosphothreonine. The tract at residues 909 to 946 (GYTNLPDVVQPSHSPTENSQGQSPPTKDGGGDYQSRGL) is disordered. Residues 919-933 (PSHSPTENSQGQSPP) are compositionally biased toward polar residues. The 288-residue stretch at 1023-1310 (NSEILCAALW…KFLCERNDKV (288 aa)) folds into the CNH domain.

It belongs to the protein kinase superfamily. STE Ser/Thr protein kinase family. STE20 subfamily. Interacts with RAP2A and NCK1. Interacts with TANC1. Mg(2+) serves as cofactor. In terms of processing, autophosphorylated.

The protein localises to the cytoplasm. It localises to the postsynaptic density. The protein resides in the cell projection. Its subcellular location is the axon. It is found in the dendrite. It carries out the reaction L-seryl-[protein] + ATP = O-phospho-L-seryl-[protein] + ADP + H(+). The catalysed reaction is L-threonyl-[protein] + ATP = O-phospho-L-threonyl-[protein] + ADP + H(+). Serine/threonine kinase which acts as a negative regulator of Ras-related Rap2-mediated signal transduction to control neuronal structure and AMPA receptor trafficking. Required for normal synaptic density, dendrite complexity, as well as surface AMPA receptor expression in hippocampal neurons. Can activate the JNK and MAPK14/p38 pathways and mediates stimulation of the stress-activated protein kinase MAPK14/p38 MAPK downstream of the Raf/ERK pathway. Phosphorylates TANC1 upon stimulation by RAP2A, MBP and SMAD1. Has an essential function in negative selection of thymocytes, perhaps by coupling NCK1 to activation of JNK1. Activator of the Hippo signaling pathway which plays a pivotal role in organ size control and tumor suppression by restricting proliferation and promoting apoptosis. MAP4Ks act in parallel to and are partially redundant with STK3/MST2 and STK4/MST2 in the phosphorylation and activation of LATS1/2, and establish MAP4Ks as components of the expanded Hippo pathway. The protein is Misshapen-like kinase 1 (Mink1) of Rattus norvegicus (Rat).